The chain runs to 624 residues: LEAF RUST 10 DISEASE-RESISTANCE LOCUS RECEPTOR-LIKE PROTEIN KINASE-like 2.2 (624 aa).

The first 30 residues, 1 to 30, serve as a signal peptide directing secretion; the sequence is MDYLSSMGSQTARFCLILLFLFYYLPCALS. Topologically, residues 31-263 are extracellular; sequence QDDLWGCGTP…IPNTRSILIT (233 aa). Asn45, Asn75, Asn85, Asn95, Asn150, and Asn164 each carry an N-linked (GlcNAc...) asparagine glycan. Residues 264–284 traverse the membrane as a helical segment; it reads IGQVVGFHVFIIVVMIIAFLF. At 285-624 the chain is on the cytoplasmic side; it reads WRRKKVNDLR…EEDSSIYSEV (340 aa). The 283-residue stretch at 317 to 599 folds into the Protein kinase domain; the sequence is KSFTEVVGRG…SLDPPPKPLL (283 aa). ATP-binding positions include 323-331 and Lys345; that span reads VGRGGFGTV. The active-site Proton acceptor is the Asp434. The interval 587–624 is disordered; the sequence is NLDSLDPPPKPLLHMPMQNNNAESSQPSEEDSSIYSEV. A compositionally biased stretch (polar residues) spans 603–624; it reads MQNNNAESSQPSEEDSSIYSEV.

This sequence belongs to the protein kinase superfamily. Ser/Thr protein kinase family.

It is found in the membrane. The enzyme catalyses L-seryl-[protein] + ATP = O-phospho-L-seryl-[protein] + ADP + H(+). It carries out the reaction L-threonyl-[protein] + ATP = O-phospho-L-threonyl-[protein] + ADP + H(+). The chain is LEAF RUST 10 DISEASE-RESISTANCE LOCUS RECEPTOR-LIKE PROTEIN KINASE-like 2.2 from Arabidopsis thaliana (Mouse-ear cress).